Reading from the N-terminus, the 420-residue chain is Gamma-glutamyl phosphate reductase (420 aa).

This sequence belongs to the gamma-glutamyl phosphate reductase family.

The protein resides in the cytoplasm. The enzyme catalyses L-glutamate 5-semialdehyde + phosphate + NADP(+) = L-glutamyl 5-phosphate + NADPH + H(+). Its pathway is amino-acid biosynthesis; L-proline biosynthesis; L-glutamate 5-semialdehyde from L-glutamate: step 2/2. Its function is as follows. Catalyzes the NADPH-dependent reduction of L-glutamate 5-phosphate into L-glutamate 5-semialdehyde and phosphate. The product spontaneously undergoes cyclization to form 1-pyrroline-5-carboxylate. The sequence is that of Gamma-glutamyl phosphate reductase from Neisseria meningitidis serogroup B (strain ATCC BAA-335 / MC58).